A 378-amino-acid chain; its full sequence is Alanine racemase (378 aa).

Lys-40 acts as the Proton acceptor; specific for D-alanine in catalysis. Residue Lys-40 is modified to N6-(pyridoxal phosphate)lysine. Residue Arg-140 coordinates substrate. The Proton acceptor; specific for L-alanine role is filled by Tyr-270. Substrate is bound at residue Met-317.

Belongs to the alanine racemase family. Pyridoxal 5'-phosphate is required as a cofactor.

It catalyses the reaction L-alanine = D-alanine. Its pathway is amino-acid biosynthesis; D-alanine biosynthesis; D-alanine from L-alanine: step 1/1. Its function is as follows. Catalyzes the interconversion of L-alanine and D-alanine. May also act on other amino acids. The sequence is that of Alanine racemase (alr) from Lacticaseibacillus casei (strain BL23) (Lactobacillus casei).